The sequence spans 417 residues: Imidazolonepropionase (417 aa).

The Fe(3+) site is built by His80 and His82. His80 and His82 together coordinate Zn(2+). 4-imidazolone-5-propanoate-binding residues include Arg89, Tyr152, and His187. Tyr152 is an N-formimidoyl-L-glutamate binding site. Residue His252 participates in Fe(3+) binding. Residue His252 participates in Zn(2+) binding. A 4-imidazolone-5-propanoate-binding site is contributed by Glu255. Asp326 contacts Fe(3+). Asp326 is a Zn(2+) binding site. Residues Asn328 and Gly330 each coordinate N-formimidoyl-L-glutamate. Ser331 lines the 4-imidazolone-5-propanoate pocket.

It belongs to the metallo-dependent hydrolases superfamily. HutI family. It depends on Zn(2+) as a cofactor. Fe(3+) serves as cofactor.

It localises to the cytoplasm. The enzyme catalyses 4-imidazolone-5-propanoate + H2O = N-formimidoyl-L-glutamate. Its pathway is amino-acid degradation; L-histidine degradation into L-glutamate; N-formimidoyl-L-glutamate from L-histidine: step 3/3. In terms of biological role, catalyzes the hydrolytic cleavage of the carbon-nitrogen bond in imidazolone-5-propanoate to yield N-formimidoyl-L-glutamate. It is the third step in the universal histidine degradation pathway. This is Imidazolonepropionase from Bacteroides fragilis (strain ATCC 25285 / DSM 2151 / CCUG 4856 / JCM 11019 / LMG 10263 / NCTC 9343 / Onslow / VPI 2553 / EN-2).